A 900-amino-acid chain; its full sequence is DNA mismatch repair protein MutS (900 aa).

637–644 contributes to the ATP binding site; the sequence is GPNMAGKS.

The protein belongs to the DNA mismatch repair MutS family.

This protein is involved in the repair of mismatches in DNA. It is possible that it carries out the mismatch recognition step. This protein has a weak ATPase activity. The sequence is that of DNA mismatch repair protein MutS from Methanosarcina acetivorans (strain ATCC 35395 / DSM 2834 / JCM 12185 / C2A).